We begin with the raw amino-acid sequence, 620 residues long: Ferric/cupric reductase transmembrane component 7 (620 aa).

The Extracellular segment spans residues Met1–Lys45. A helical membrane pass occupies residues Phe46–Met66. Residues Tyr67–Lys107 are Cytoplasmic-facing. Residues Phe108–Val128 form a helical membrane-spanning segment. Over Met129–Ser167 the chain is Extracellular. Residues Ala161 to Gly320 enclose the Ferric oxidoreductase domain. A helical membrane pass occupies residues Leu168 to Leu188. The Cytoplasmic portion of the chain corresponds to Ser189–Asn194. A helical membrane pass occupies residues Ile195–Phe215. The heme site is built by His197 and His211. Over Leu216–Met237 the chain is Extracellular. The chain crosses the membrane as a helical span at residues Trp238–Ile258. At Ala259 to Glu265 the chain is on the cytoplasmic side. The chain crosses the membrane as a helical span at residues Ile266–Val286. Residues His271 and His285 each coordinate heme. Topologically, residues Tyr287–Ser292 are extracellular. A helical membrane pass occupies residues His293–Val313. Topologically, residues Lys314 to Tyr620 are cytoplasmic. The region spanning Arg321–Asp419 is the FAD-binding FR-type domain. His369–Pro375 contacts FAD. The segment at Ser519–Phe544 is disordered. Basic and acidic residues predominate over residues Asp523–Glu532.

It belongs to the ferric reductase (FRE) family. It depends on FAD as a cofactor.

It is found in the cell membrane. It catalyses the reaction 2 a Fe(II)-siderophore + NADP(+) + H(+) = 2 a Fe(III)-siderophore + NADPH. Cell surface metalloreductase. May be involved in copper homeostasis. The sequence is that of Ferric/cupric reductase transmembrane component 7 (FRE7) from Saccharomyces cerevisiae (strain YJM789) (Baker's yeast).